Here is a 343-residue protein sequence, read N- to C-terminus: Probable magnesium transporter NIPA4 (343 aa).

Residues 1-18 (MAESSGSWRDSYKGMSSD) lie on the Extracellular side of the membrane. A helical transmembrane segment spans residues 19-39 (NIKGLVLALSSSLFIGASFIV). Residues 40-66 (KKKGLKKAASTGTRAGVGGYSYLYEPL) lie on the Cytoplasmic side of the membrane. A helical transmembrane segment spans residues 67–87 (WWIGMTTMLLGEIANFAAYAF). Over 88-90 (APA) the chain is Extracellular. The helical transmembrane segment at 91–111 (ILVTPLGAVSIIISAVLAHII) threads the bilayer. Over 112–115 (LREK) the chain is Cytoplasmic. Residues 116–136 (LHIFGILGCALCVVGSTTIVL) form a helical membrane-spanning segment. The Extracellular segment spans residues 137–157 (HAPQEREIDSVIEVWNLATEP). The chain crosses the membrane as a helical span at residues 158–178 (AFMFYASLVIGAAVFLIIRFV). Topologically, residues 179–189 (PQYGQTNVMVY) are cytoplasmic. A helical transmembrane segment spans residues 190 to 210 (IGICSLVGSLSVMSVKALGIA). Over 211–220 (LKLTFSGTNQ) the chain is Extracellular. A helical membrane pass occupies residues 221–241 (LFYPQTWIFTLVVLTCVVTQL). The Cytoplasmic segment spans residues 242-254 (NYLNKALDTFNTA). Residues 255 to 275 (IVSPIYYVMFTSLTILASVIM) form a helical membrane-spanning segment. Residues 276–283 (FKDWDRQN) are Extracellular-facing. The chain crosses the membrane as a helical span at residues 284–304 (GTQIVTEICGFVTILSGTFLL). The Cytoplasmic segment spans residues 305-343 (HRTKDMVEGSSVILPLRISKHINEEEGIPLRRQESLRSP).

Belongs to the NIPA (TC 2.A.7) family. Homodimer.

It localises to the cell membrane. The protein localises to the early endosome. In terms of biological role, acts as a Mg(2+) transporter. Can also transport other divalent cations such as Fe(2+), Sr(2+), Ba(2+), Mn(2+) and Co(2+) but to a much less extent than Mg(2+). This Arabidopsis thaliana (Mouse-ear cress) protein is Probable magnesium transporter NIPA4.